Consider the following 281-residue polypeptide: uncharacterized protein (281 aa).

A disordered region spans residues 1 to 30; that stretch reads MVQIQFHQGEPLGHKKEKPPPVSPPSPPPI. A compositionally biased stretch (pro residues) spans 20 to 30; that stretch reads PPVSPPSPPPI. 7 consecutive transmembrane segments (helical) span residues 58-78, 88-107, 117-137, 145-165, 171-191, 196-216, and 248-268; these read TVVF…LIPW, TLPF…AYWL, MLVM…GLCF, AYVL…LMAW, LAIL…IAVQ, YQRI…IVLI, and VIMF…PNYA.

Belongs to the cytomegalovirus US12 family.

It localises to the host membrane. This is an uncharacterized protein from Homo sapiens (Human).